A 463-amino-acid chain; its full sequence is UDP-N-acetylmuramoylalanine--D-glutamate ligase (463 aa).

109–115 serves as a coordination point for ATP; it reads GTDGKST.

Belongs to the MurCDEF family.

It is found in the cytoplasm. The enzyme catalyses UDP-N-acetyl-alpha-D-muramoyl-L-alanine + D-glutamate + ATP = UDP-N-acetyl-alpha-D-muramoyl-L-alanyl-D-glutamate + ADP + phosphate + H(+). The protein operates within cell wall biogenesis; peptidoglycan biosynthesis. Its function is as follows. Cell wall formation. Catalyzes the addition of glutamate to the nucleotide precursor UDP-N-acetylmuramoyl-L-alanine (UMA). The chain is UDP-N-acetylmuramoylalanine--D-glutamate ligase from Leptospira interrogans serogroup Icterohaemorrhagiae serovar Lai (strain 56601).